The chain runs to 292 residues: MPSLKDLRNRIASVKATQKITKAMQMVAAAKLRRAQEAAEAARPYSQRMGAVLANIAQNVSGEDAPALMVGTGKDDVHLLVVCTAKRGLCGGFNSQIARLARDHARKLLAEGKTVKIITVGKKGADILRREFSALLHDHVDLREVKQLAFVHADQIGHKIIKLFEEGAFDVCTLFYSEFKSVISQVSTAQQLIPASADNEAEMETAGDAIYEYEPDPAAILSTLIPRNISVQIFRALLENVAGEMGAKMSAMDNATRNAGDMINKLSITYNRQRQAQITKELIEIISGAEAL.

This sequence belongs to the ATPase gamma chain family. F-type ATPases have 2 components, CF(1) - the catalytic core - and CF(0) - the membrane proton channel. CF(1) has five subunits: alpha(3), beta(3), gamma(1), delta(1), epsilon(1). CF(0) has three main subunits: a, b and c.

The protein resides in the cell inner membrane. Functionally, produces ATP from ADP in the presence of a proton gradient across the membrane. The gamma chain is believed to be important in regulating ATPase activity and the flow of protons through the CF(0) complex. The sequence is that of ATP synthase gamma chain from Brucella abortus (strain S19).